The chain runs to 647 residues: Acetyl-coenzyme A synthetase (647 aa).

CoA is bound by residues R190–K193, T310, and N334. ATP-binding positions include G386–P388, D410–T415, D499, and R514. S522 is a binding site for CoA. R525 is an ATP binding site. Residues V536, H538, and V541 each contribute to the Mg(2+) site. R583 contacts CoA. The residue at position 608 (K608) is an N6-acetyllysine.

This sequence belongs to the ATP-dependent AMP-binding enzyme family. It depends on Mg(2+) as a cofactor. In terms of processing, acetylated. Deacetylation by the SIR2-homolog deacetylase activates the enzyme.

The enzyme catalyses acetate + ATP + CoA = acetyl-CoA + AMP + diphosphate. Functionally, catalyzes the conversion of acetate into acetyl-CoA (AcCoA), an essential intermediate at the junction of anabolic and catabolic pathways. AcsA undergoes a two-step reaction. In the first half reaction, AcsA combines acetate with ATP to form acetyl-adenylate (AcAMP) intermediate. In the second half reaction, it can then transfer the acetyl group from AcAMP to the sulfhydryl group of CoA, forming the product AcCoA. The chain is Acetyl-coenzyme A synthetase from Xanthomonas axonopodis pv. citri (strain 306).